The primary structure comprises 168 residues: S-ribosylhomocysteine lyase (168 aa).

The Fe cation site is built by H54, H58, and C128.

This sequence belongs to the LuxS family. Homodimer. Fe cation serves as cofactor.

The enzyme catalyses S-(5-deoxy-D-ribos-5-yl)-L-homocysteine = (S)-4,5-dihydroxypentane-2,3-dione + L-homocysteine. Functionally, involved in the synthesis of autoinducer 2 (AI-2) which is secreted by bacteria and is used to communicate both the cell density and the metabolic potential of the environment. The regulation of gene expression in response to changes in cell density is called quorum sensing. Catalyzes the transformation of S-ribosylhomocysteine (RHC) to homocysteine (HC) and 4,5-dihydroxy-2,3-pentadione (DPD). The sequence is that of S-ribosylhomocysteine lyase from Neisseria meningitidis serogroup A / serotype 4A (strain DSM 15465 / Z2491).